A 285-amino-acid polypeptide reads, in one-letter code: Methionine aminopeptidase 2 (285 aa).

His114 is a substrate binding site. Positions 131, 142, and 205 each coordinate a divalent metal cation. His212 contacts substrate. A divalent metal cation contacts are provided by Glu238 and Glu269.

As to quaternary structure, monomer. It depends on Co(2+) as a cofactor. Requires Zn(2+) as cofactor. The cofactor is Mn(2+). Fe(2+) is required as a cofactor.

The enzyme catalyses Release of N-terminal amino acids, preferentially methionine, from peptides and arylamides.. With respect to regulation, inhibited by bengamide derivatives and by various metalloform-selective inhibitors. In terms of biological role, removes the N-terminal methionine from nascent proteins. The N-terminal methionine is often cleaved when the second residue in the primary sequence is small and uncharged (Met-Ala-, Cys, Gly, Pro, Ser, Thr, or Val). Requires deformylation of the N(alpha)-formylated initiator methionine before it can be hydrolyzed. The protein is Methionine aminopeptidase 2 of Mycobacterium tuberculosis (strain ATCC 25618 / H37Rv).